A 259-amino-acid polypeptide reads, in one-letter code: Pimeloyl-[acyl-carrier protein] methyl ester esterase (259 aa).

Substrate is bound by residues Trp-18, 78-79 (SL), and 139-143 (FLALD). Catalysis depends on Ser-78, which acts as the Nucleophile. Active-site residues include Asp-203 and His-231. His-231 contacts substrate.

The protein belongs to the AB hydrolase superfamily. Carboxylesterase BioH family. In terms of assembly, monomer.

The protein localises to the cytoplasm. The catalysed reaction is 6-carboxyhexanoyl-[ACP] methyl ester + H2O = 6-carboxyhexanoyl-[ACP] + methanol + H(+). Its pathway is cofactor biosynthesis; biotin biosynthesis. In terms of biological role, the physiological role of BioH is to remove the methyl group introduced by BioC when the pimeloyl moiety is complete. It allows to synthesize pimeloyl-ACP via the fatty acid synthetic pathway through the hydrolysis of the ester bonds of pimeloyl-ACP esters. The chain is Pimeloyl-[acyl-carrier protein] methyl ester esterase from Stenotrophomonas maltophilia (strain R551-3).